Reading from the N-terminus, the 233-residue chain is Cell surface glycoprotein gp42 (233 aa).

An N-terminal signal peptide occupies residues 1 to 16 (MLLWMVLLLCVSMTEA). Ig-like domains are found at residues 23–98 (PVLS…GTIQ) and 115–195 (PVLT…RDIS). N-linked (GlcNAc...) asparagine glycosylation is found at asparagine 29, asparagine 66, and asparagine 181. 2 cysteine pairs are disulfide-bonded: cysteine 40–cysteine 88 and cysteine 136–cysteine 184. Glycine 206 carries GPI-anchor amidated glycine lipidation. Residues 207–233 (TASMKSTTVVIWLPVSCLVGWPWLLRF) constitute a propeptide, removed in mature form.

NK cells.

The protein localises to the cell membrane. The polypeptide is Cell surface glycoprotein gp42 (Rattus norvegicus (Rat)).